The chain runs to 565 residues: Perivitellin-2 67 kDa subunit (565 aa).

An N-terminal signal peptide occupies residues 1–26 (MSQLRWWVVSQLLLLIVVCILDHSEG). The MACPF domain maps to 27–340 (ARVCPKIVPG…AKVANLDRLT (314 aa)).

In terms of assembly, perivitellin-2 is a heterooctamer of 4 identical 98 kDa heterodimers, each composed of one 31 kDa and one 67 kDa subunits. The 98 kDa heterodimer subunits are held together by disulfide bridges while the heterodimers are assembled into the native perivitellin-2 octamer by non-covalent forces. Post-translationally, glycosylated. Contains four O-linked and one N-linked oligosaccharide bonds. The protein contains 2.5% of carbohydrates (high levels of mannose, galactose, and NAcGlucosamine, and small amounts of NacGalactosamine). In terms of processing, PV2 is a very high density lipoprotein (VHDL). It contains 3.75% of lipids. The major lipid classes are free sterols and phospholipids and also have significant quantities of energy-providing triacylglycerides and free fatty acids. As to expression, produced by albumen secretory cells. Found in developing eggs.

The protein resides in the secreted. It is found in the target cell membrane. In terms of biological role, the egg defensive protein perivitellin-2 is a pore-forming two-subunit glycoprotein that affects both the nervous and digestive systems of mammals. In addition, it is a source of both structural and energetic molecules during embryonic development. The tachylectin subunit (31 kDa) binds target membranes while the MACPF subunit (67 kDa) disrupts lipid bilayers forming large pores altering the plasma membrance conductance. Both in vivo and in vitro, the protein shows wide pH range stability and is resistant to enzymatic proteolysis from gastrointestinal environments. It specifically binds mature enterocytes but does not cause cell disruption on caco-2 (human colorectal adenocarcinoma cells) or rat intestinal cells. After oral administration to mice, it binds enterocytes and induces large dose-dependent morphological changes on their small intestine mucosa, reducing the absorptive surface. Additionally, it is detected in the Peyer's patches where it activates lymphoid follicles and triggers apoptosis. The toxin can also traverse the intestinal barrier and induce oral adaptive immunity with evidence of circulating antibody response. The toxin also shows hemagglutination properties thanks to the tachylectin subunit, but does not show hemolytic activity. In addition to enterotoxin activity, the toxin also acts as a neurotoxin, since an intraperitoneal injection induces paralysis of the mice rear limbs, followed by death. The sequence is that of Perivitellin-2 67 kDa subunit from Pomacea canaliculata (Golden apple snail).